Consider the following 140-residue polypeptide: MTDLSNLVSQCGVDLYDAEVVNENGRVIYRVYITKNGGVSLEECEAVSKLLSPIYDVMPPVSGEWILEVSSPGLERKLSKIEHFTLSIGEFAKIILNDKTEIKGKIVSVKDDNICINIKNNESIEVKFENIKKAKTYMEW.

It belongs to the RimP family.

The protein localises to the cytoplasm. Required for maturation of 30S ribosomal subunits. The chain is Ribosome maturation factor RimP from Campylobacter fetus subsp. fetus (strain 82-40).